The following is a 458-amino-acid chain: Transmembrane protein 135 (458 aa).

The next 6 helical transmembrane spans lie at 68–88 (ILQS…FFCI), 96–116 (FYLW…AILV), 149–169 (TLRN…MFFF), 298–318 (FQLG…SCFL), 331–351 (IIAG…TISM), and 380–400 (IIYS…VQTL).

It belongs to the TMEM135 family.

Its subcellular location is the mitochondrion membrane. It localises to the peroxisome membrane. In terms of biological role, involved in mitochondrial metabolism by regulating the balance between mitochondrial fusion and fission. May act as a regulator of mitochondrial fission that promotes DNM1L-dependent fission through activation of DNM1L. May be involved in peroxisome organization. The polypeptide is Transmembrane protein 135 (Bos taurus (Bovine)).